Here is a 418-residue protein sequence, read N- to C-terminus: Tyrosine--tRNA ligase (418 aa).

Position 34 (Y34) interacts with L-tyrosine. Positions 39 to 48 match the 'HIGH' region motif; sequence PTADSLHLGH. L-tyrosine is bound by residues Y169 and Q173. The 'KMSKS' region motif lies at 229-233; that stretch reads KFGKS. K232 contacts ATP. The S4 RNA-binding domain occupies 352 to 418; sequence LNLVDMLVTA…GKKKYAVLTY (67 aa).

Belongs to the class-I aminoacyl-tRNA synthetase family. TyrS type 1 subfamily. As to quaternary structure, homodimer.

Its subcellular location is the cytoplasm. It carries out the reaction tRNA(Tyr) + L-tyrosine + ATP = L-tyrosyl-tRNA(Tyr) + AMP + diphosphate + H(+). Its function is as follows. Catalyzes the attachment of tyrosine to tRNA(Tyr) in a two-step reaction: tyrosine is first activated by ATP to form Tyr-AMP and then transferred to the acceptor end of tRNA(Tyr). The polypeptide is Tyrosine--tRNA ligase (Streptococcus pyogenes serotype M5 (strain Manfredo)).